We begin with the raw amino-acid sequence, 665 residues long: DNA ligase (665 aa).

NAD(+)-binding positions include 34 to 38 (DEEYD), 83 to 84 (SL), and Glu114. The N6-AMP-lysine intermediate role is filled by Lys116. Positions 137, 171, 287, and 311 each coordinate NAD(+). Residues Cys405, Cys408, Cys424, and Cys429 each coordinate Zn(2+). In terms of domain architecture, BRCT spans 587–665 (KKSSKLAGLT…EDEFKKMIID (79 aa)).

This sequence belongs to the NAD-dependent DNA ligase family. LigA subfamily. The cofactor is Mg(2+). Requires Mn(2+) as cofactor.

The enzyme catalyses NAD(+) + (deoxyribonucleotide)n-3'-hydroxyl + 5'-phospho-(deoxyribonucleotide)m = (deoxyribonucleotide)n+m + AMP + beta-nicotinamide D-nucleotide.. In terms of biological role, DNA ligase that catalyzes the formation of phosphodiester linkages between 5'-phosphoryl and 3'-hydroxyl groups in double-stranded DNA using NAD as a coenzyme and as the energy source for the reaction. It is essential for DNA replication and repair of damaged DNA. The protein is DNA ligase of Thermosipho africanus (strain TCF52B).